We begin with the raw amino-acid sequence, 862 residues long: DNA topoisomerase 3-beta-1 (862 aa).

In terms of domain architecture, Toprim spans 3-153 (TVLMVAEKPS…EKTVFRARFS (151 aa)). The Topo IA-type catalytic domain maps to 171–593 (DHNEALSVDA…HTLDVFKRKF (423 aa)). Tyrosine 336 (O-(5'-phospho-DNA)-tyrosine intermediate) is an active-site residue. Residues 821-851 (PMHRGGPGRRQGRGRGRARRPPGKPNPRRPK) show a composition bias toward basic residues. Residues 821 to 854 (PMHRGGPGRRQGRGRGRARRPPGKPNPRRPKDKM) are disordered.

The protein belongs to the type IA topoisomerase family. As to expression, isoform 1 is found in testis, heart and skeletal muscle. A 4 kb transcript which probably represents isoform 2 is found in thymus, kidney and pancreas.

It carries out the reaction ATP-independent breakage of single-stranded DNA, followed by passage and rejoining.. Its function is as follows. Releases the supercoiling and torsional tension of DNA introduced during the DNA replication and transcription by transiently cleaving and rejoining one strand of the DNA duplex. Introduces a single-strand break via transesterification at a target site in duplex DNA. The scissile phosphodiester is attacked by the catalytic tyrosine of the enzyme, resulting in the formation of a DNA-(5'-phosphotyrosyl)-enzyme intermediate and the expulsion of a 3'-OH DNA strand. The free DNA strand than undergoes passage around the unbroken strand thus removing DNA supercoils. Finally, in the religation step, the DNA 3'-OH attacks the covalent intermediate to expel the active-site tyrosine and restore the DNA phosphodiester backbone. Possesses negatively supercoiled DNA relaxing activity. This is DNA topoisomerase 3-beta-1 (TOP3B) from Homo sapiens (Human).